The chain runs to 131 residues: Small ribosomal subunit protein eS8 (131 aa).

The interval 15-36 (PSGGKKGRVRKTKKKALGGGPP) is disordered. Basic residues predominate over residues 17 to 30 (GGKKGRVRKTKKKA).

The protein belongs to the eukaryotic ribosomal protein eS8 family. In terms of assembly, part of the 30S ribosomal subunit.

In Pyrobaculum calidifontis (strain DSM 21063 / JCM 11548 / VA1), this protein is Small ribosomal subunit protein eS8.